The primary structure comprises 310 residues: ADP-L-glycero-D-manno-heptose-6-epimerase (310 aa).

NADP(+)-binding positions include 10-11 (FI), 31-32 (DN), K38, K53, 75-79 (EGACS), and N92. Y140 acts as the Proton acceptor in catalysis. K144 lines the NADP(+) pocket. N169 is a binding site for substrate. The NADP(+) site is built by V170 and K178. The active-site Proton acceptor is K178. Residues S180, H187, 201 to 204 (FEGS), R209, and Y272 each bind substrate.

Belongs to the NAD(P)-dependent epimerase/dehydratase family. HldD subfamily. As to quaternary structure, homopentamer. It depends on NADP(+) as a cofactor.

The enzyme catalyses ADP-D-glycero-beta-D-manno-heptose = ADP-L-glycero-beta-D-manno-heptose. It functions in the pathway nucleotide-sugar biosynthesis; ADP-L-glycero-beta-D-manno-heptose biosynthesis; ADP-L-glycero-beta-D-manno-heptose from D-glycero-beta-D-manno-heptose 7-phosphate: step 4/4. Catalyzes the interconversion between ADP-D-glycero-beta-D-manno-heptose and ADP-L-glycero-beta-D-manno-heptose via an epimerization at carbon 6 of the heptose. In Salmonella newport (strain SL254), this protein is ADP-L-glycero-D-manno-heptose-6-epimerase.